Reading from the N-terminus, the 288-residue chain is Acetyl-coenzyme A carboxylase carboxyl transferase subunit beta (288 aa).

Residues 32 to 288 enclose the CoA carboxyltransferase N-terminal domain; the sequence is LLLICPKCKK…ILMLHNVEAR (257 aa). Residues cysteine 36, cysteine 39, cysteine 55, and cysteine 58 each contribute to the Zn(2+) site. The C4-type zinc finger occupies 36–58; that stretch reads CPKCKKTLLKSELADNLDVCREC.

This sequence belongs to the AccD/PCCB family. As to quaternary structure, acetyl-CoA carboxylase is a heterohexamer composed of biotin carboxyl carrier protein (AccB), biotin carboxylase (AccC) and two subunits each of ACCase subunit alpha (AccA) and ACCase subunit beta (AccD). Requires Zn(2+) as cofactor.

The protein localises to the cytoplasm. It catalyses the reaction N(6)-carboxybiotinyl-L-lysyl-[protein] + acetyl-CoA = N(6)-biotinyl-L-lysyl-[protein] + malonyl-CoA. The protein operates within lipid metabolism; malonyl-CoA biosynthesis; malonyl-CoA from acetyl-CoA: step 1/1. Component of the acetyl coenzyme A carboxylase (ACC) complex. Biotin carboxylase (BC) catalyzes the carboxylation of biotin on its carrier protein (BCCP) and then the CO(2) group is transferred by the transcarboxylase to acetyl-CoA to form malonyl-CoA. This Ruminiclostridium cellulolyticum (strain ATCC 35319 / DSM 5812 / JCM 6584 / H10) (Clostridium cellulolyticum) protein is Acetyl-coenzyme A carboxylase carboxyl transferase subunit beta.